Reading from the N-terminus, the 843-residue chain is Protein P (843 aa).

Residues Met1 to Gln177 are terminal protein domain (TP). The segment at Asp178–Ile346 is spacer. 2 disordered regions span residues Arg219–Pro249 and Ser290–Ser316. The span at Ser290–Gly299 shows a compositional bias: polar residues. Residues Glu347–Gln690 are polymerase/reverse transcriptase domain (RT). The region spanning Glu357–Ile600 is the Reverse transcriptase domain. The Mg(2+) site is built by Asp429, Asp551, and Asp552.

This sequence belongs to the hepadnaviridae P protein family.

The enzyme catalyses DNA(n) + a 2'-deoxyribonucleoside 5'-triphosphate = DNA(n+1) + diphosphate. It catalyses the reaction Endonucleolytic cleavage to 5'-phosphomonoester.. With respect to regulation, activated by host HSP70 and HSP40 in vitro to be able to bind the epsilon loop of the pgRNA. Because deletion of the RNase H region renders the protein partly chaperone-independent, the chaperones may be needed indirectly to relieve occlusion of the RNA-binding site by this domain. Inhibited by several reverse-transcriptase inhibitors: Lamivudine, Adefovir and Entecavir. Functionally, multifunctional enzyme that converts the viral RNA genome into dsDNA in viral cytoplasmic capsids. This enzyme displays a DNA polymerase activity that can copy either DNA or RNA templates, and a ribonuclease H (RNase H) activity that cleaves the RNA strand of RNA-DNA heteroduplexes in a partially processive 3'- to 5'-endonucleasic mode. Neo-synthesized pregenomic RNA (pgRNA) are encapsidated together with the P protein, and reverse-transcribed inside the nucleocapsid. Initiation of reverse-transcription occurs first by binding the epsilon loop on the pgRNA genome, and is initiated by protein priming, thereby the 5'-end of (-)DNA is covalently linked to P protein. Partial (+)DNA is synthesized from the (-)DNA template and generates the relaxed circular DNA (RC-DNA) genome. After budding and infection, the RC-DNA migrates in the nucleus, and is converted into a plasmid-like covalently closed circular DNA (cccDNA). The activity of P protein does not seem to be necessary for cccDNA generation, and is presumably released from (+)DNA by host nuclear DNA repair machinery. This is Protein P from Homo sapiens (Human).